A 148-amino-acid polypeptide reads, in one-letter code: uncharacterized protein (148 aa).

This is an uncharacterized protein from Haemophilus influenzae (strain ATCC 51907 / DSM 11121 / KW20 / Rd).